The sequence spans 179 residues: Large ribosomal subunit protein uL6 (179 aa).

The protein belongs to the universal ribosomal protein uL6 family. In terms of assembly, part of the 50S ribosomal subunit.

Its function is as follows. This protein binds to the 23S rRNA, and is important in its secondary structure. It is located near the subunit interface in the base of the L7/L12 stalk, and near the tRNA binding site of the peptidyltransferase center. In Leptospira biflexa serovar Patoc (strain Patoc 1 / ATCC 23582 / Paris), this protein is Large ribosomal subunit protein uL6.